Here is a 546-residue protein sequence, read N- to C-terminus: Peroxisomal OPC-8:0-CoA ligase 1 (546 aa).

Residues Ser-197, Ser-198, Gly-199, Thr-200, Thr-201, and Lys-205 each contribute to the ATP site. Lys-265 lines the CoA pocket. Positions 267 to 338 (EMHEMMSAIG…EKYPTVKILQ (72 aa)) are SBD1. 5 residues coordinate ATP: Gln-338, Gly-339, Thr-343, Asp-424, and Arg-439. The SBD2 stretch occupies residues 339–403 (GYGLTESTGI…LKGPSIMKGY (65 aa)). 2 residues coordinate CoA: Lys-447 and Gly-448. Position 530 (Lys-530) interacts with ATP. Residues 544–546 (SKL) carry the Microbody targeting signal motif.

Belongs to the ATP-dependent AMP-binding enzyme family. The cofactor is Mg(2+). Expressed at low levels in seedlings, cotyledons, leaves, hypocotyls and roots.

The protein resides in the peroxisome. It catalyses the reaction (9S,13S,15Z)-12-oxophyto-10,15-dienoate + ATP + CoA = (10Z,15Z)-12-oxophytodienoyl-CoA + AMP + diphosphate. The catalysed reaction is (1S,2S)-OPC-8 + ATP + CoA = OPC8-CoA + AMP + diphosphate. It carries out the reaction hexadecanoate + ATP + CoA = hexadecanoyl-CoA + AMP + diphosphate. The enzyme catalyses (9Z)-octadecenoate + ATP + CoA = (9Z)-octadecenoyl-CoA + AMP + diphosphate. It catalyses the reaction tetradecanoate + ATP + CoA = tetradecanoyl-CoA + AMP + diphosphate. The catalysed reaction is decanoate + ATP + CoA = decanoyl-CoA + AMP + diphosphate. It carries out the reaction dodecanoate + ATP + CoA = dodecanoyl-CoA + AMP + diphosphate. The enzyme catalyses octadecanoate + ATP + CoA = octadecanoyl-CoA + AMP + diphosphate. It catalyses the reaction OPC-6 + ATP + CoA = OPC-6-CoA + AMP + diphosphate. The catalysed reaction is dinor-OPDA + ATP + CoA = dinor-OPDA-CoA + AMP + diphosphate. Functionally, contributes to jasmonic acid biosynthesis by initiating the beta-oxidative chain shortening of its precursors. Converts 12-oxo-phytodienoic acid (OPDA) and 3-oxo-2-(2'-pentenyl)-cyclopentane-1-octanoic acid (OPC-8:0) into OPDA-CoA and OPC-8:0-CoA, respectively. Follows a two-step reaction mechanism, wherein the carboxylate substrate first undergoes adenylation by ATP, followed by a thioesterification in the presence of CoA to yield the final CoA thioester. This Arabidopsis thaliana (Mouse-ear cress) protein is Peroxisomal OPC-8:0-CoA ligase 1.